A 546-amino-acid chain; its full sequence is MSSLFFTHFALKTIGTLGGGLSDFPWLSISILFPIASAFLIPFFPDKGEGKEVRWFALSVALITFLVTVGAYINGFDINNENVQLKESISWLPKLGLTWSVGADGISMPLILLTSFITALAVLAAWPVKFKPKLFFFLILIMDGGQIAVFAVQDMLLFFLTWELELLPVYLLLAIWGGKNRQYAATKFIIYTAGSSIFILLAALAMGFYGTEVPNFEFAHLANQNFSQNFQILCYIGLLIAFGVKLPIVPLHTWLPDAHGEATAPVHMLLAGILLKMGGYALLRFNAQLLPVAHAQFAPLLIVLGVVNIIYAALTSFAQRNLKRKIAYSSISHMGFVLIGIGSFSSLGTSGAMLQMVSHGLIGASLFFLVGATYDRTKTLKLDEMGGVGQKMRIMFALWTACSLASLALPGMSGFVSELMVFTGFVTDEVYTLPFRVVMASLAAVGVILTPIYLLSMLREIFFGKENPKLTEDRNLIDAEPREVYIIACLLLPIIGIGLYPRLVTESYLATISNLVDRDLNAVKSVPKTNIFAGNKKSQILKAPTI.

14 helical membrane-spanning segments follow: residues Phe-24–Phe-44, Phe-56–Phe-76, Ile-106–Trp-126, Pro-132–Val-152, Leu-156–Trp-176, Phe-188–Phe-208, Ile-232–His-252, Thr-263–Leu-283, Phe-297–Phe-317, Ile-326–Ser-346, Ala-352–Ala-372, Phe-396–Val-416, Val-437–Met-457, and Val-484–Val-504.

Belongs to the complex I subunit 4 family.

It localises to the cellular thylakoid membrane. The catalysed reaction is a plastoquinone + NADH + (n+1) H(+)(in) = a plastoquinol + NAD(+) + n H(+)(out). The enzyme catalyses a plastoquinone + NADPH + (n+1) H(+)(in) = a plastoquinol + NADP(+) + n H(+)(out). NDH-1 shuttles electrons from NAD(P)H, via FMN and iron-sulfur (Fe-S) centers, to quinones in the respiratory chain. The immediate electron acceptor for the enzyme in this species is believed to be plastoquinone. Couples the redox reaction to proton translocation (for every two electrons transferred, four hydrogen ions are translocated across the cytoplasmic membrane), and thus conserves the redox energy in a proton gradient. The polypeptide is NAD(P)H-quinone oxidoreductase chain 4 (Prochlorococcus marinus (strain MIT 9515)).